Reading from the N-terminus, the 234-residue chain is UPF0502 protein BPSS1373 (234 aa).

Belongs to the UPF0502 family.

This is UPF0502 protein BPSS1373 from Burkholderia pseudomallei (strain K96243).